We begin with the raw amino-acid sequence, 146 residues long: 3-dehydroquinate dehydratase (146 aa).

Catalysis depends on tyrosine 22, which acts as the Proton acceptor. Residues asparagine 74, histidine 80, and aspartate 87 each contribute to the substrate site. Residue histidine 100 is the Proton donor of the active site. Substrate is bound by residues 101-102 (LS) and arginine 111.

This sequence belongs to the type-II 3-dehydroquinase family. As to quaternary structure, homododecamer.

It catalyses the reaction 3-dehydroquinate = 3-dehydroshikimate + H2O. The protein operates within metabolic intermediate biosynthesis; chorismate biosynthesis; chorismate from D-erythrose 4-phosphate and phosphoenolpyruvate: step 3/7. In terms of biological role, catalyzes a trans-dehydration via an enolate intermediate. In Clostridium perfringens (strain SM101 / Type A), this protein is 3-dehydroquinate dehydratase.